Here is a 76-residue protein sequence, read N- to C-terminus: Small ribosomal subunit protein eS17 (76 aa).

It belongs to the eukaryotic ribosomal protein eS17 family.

The polypeptide is Small ribosomal subunit protein eS17 (Metallosphaera sedula (strain ATCC 51363 / DSM 5348 / JCM 9185 / NBRC 15509 / TH2)).